The primary structure comprises 1383 residues: DNA-directed RNA polymerase subunit beta (1383 aa).

This sequence belongs to the RNA polymerase beta chain family. The RNAP catalytic core consists of 2 alpha, 1 beta, 1 beta' and 1 omega subunit. When a sigma factor is associated with the core the holoenzyme is formed, which can initiate transcription.

The catalysed reaction is RNA(n) + a ribonucleoside 5'-triphosphate = RNA(n+1) + diphosphate. In terms of biological role, DNA-dependent RNA polymerase catalyzes the transcription of DNA into RNA using the four ribonucleoside triphosphates as substrates. This Anaplasma phagocytophilum (strain HZ) protein is DNA-directed RNA polymerase subunit beta.